The chain runs to 324 residues: MSTATASPAVKLNSGYEIPLVGFGCWKLTNDVASDQIYRAIKSGYRLFDGAEDYANEQEVGEGIKRAIKEGIVKREELFITSKLWNSFHDKKNVEVALMKTLSDLNLDYVDLFYIHFPIAQKPVPIEKKYPPGFYCGDGDKWSIEEVPLLDTWRALEKLVDQGLAKSIGISNFSAQLIYDLIRGCTIKPVALQIEHHPYLTQPKLVEYVQLHDIQITGYSSFGPQSFLEMDLKRALDTPVLLEEPTVKSIADKHGKSPAQVLLRYQTQRGIAVIPRSNSPDRMAQNLSVIDFELTQDDLQAIAELDCNLRFNEPWDFSNIPVFV.

The active-site Proton donor is the tyrosine 54. Position 116 (histidine 116) interacts with substrate. An NAD(+)-binding site is contributed by 220–286 (SSFGPQSFLE…SNSPDRMAQN (67 aa)).

It belongs to the aldo/keto reductase family.

It catalyses the reaction xylitol + NAD(+) = D-xylose + NADH + H(+). The catalysed reaction is xylitol + NADP(+) = D-xylose + NADPH + H(+). The protein operates within carbohydrate metabolism; D-xylose degradation. Functionally, reduces D-xylose into xylitol. Preferentially utilizes NADH as a cosubstrate. The sequence is that of NADH-dependent D-xylose reductase (XYL1) from Candida parapsilosis (Yeast).